Here is a 152-residue protein sequence, read N- to C-terminus: Transcriptional regulator MraZ (152 aa).

2 consecutive SpoVT-AbrB domains span residues 5-52 (ATLV…TLPE) and 81-124 (ASEC…DEQV).

It belongs to the MraZ family. As to quaternary structure, forms oligomers.

The protein localises to the cytoplasm. The protein resides in the nucleoid. Negatively regulates its own expression and that of the subsequent genes in the proximal part of the division and cell wall (dcw) gene cluster. Acts by binding directly to DNA. May also regulate the expression of genes outside the dcw cluster. In Proteus mirabilis (strain HI4320), this protein is Transcriptional regulator MraZ.